A 141-amino-acid chain; its full sequence is MAKKVTAVIKLALQAGKANPAPPVGPALGQHGVNIMMFCKEYNARTQDKAGFVIPVEISVYEDRSFTFITKTPPASVLITKAAKIEKGSGESAKGNVGSINRAQLEEIAKTKLPDLNCTSVESAMRIIEGTARNMGVSISD.

It belongs to the universal ribosomal protein uL11 family. Part of the ribosomal stalk of the 50S ribosomal subunit. Interacts with L10 and the large rRNA to form the base of the stalk. L10 forms an elongated spine to which L12 dimers bind in a sequential fashion forming a multimeric L10(L12)X complex. In terms of processing, one or more lysine residues are methylated.

Forms part of the ribosomal stalk which helps the ribosome interact with GTP-bound translation factors. This chain is Large ribosomal subunit protein uL11, found in Parasynechococcus marenigrum (strain WH8102).